The chain runs to 145 residues: Cytochrome b (145 aa).

The helical transmembrane segment at 38-58 threads the bilayer; sequence FFALHFLLPFVLAALVIMHLI. The heme b site is built by His42 and His56. His61 is an a ubiquinone binding site. The chain crosses the membrane as a helical span at residues 85-105; it reads FVFKDLVTVFIFFIVLSVFVF.

The protein belongs to the cytochrome b family. As to quaternary structure, fungal cytochrome b-c1 complex contains 10 subunits; 3 respiratory subunits, 2 core proteins and 5 low-molecular weight proteins. Cytochrome b-c1 complex is a homodimer. The cofactor is heme b.

It localises to the mitochondrion inner membrane. Its function is as follows. Component of the ubiquinol-cytochrome c reductase complex (complex III or cytochrome b-c1 complex) that is part of the mitochondrial respiratory chain. The b-c1 complex mediates electron transfer from ubiquinol to cytochrome c. Contributes to the generation of a proton gradient across the mitochondrial membrane that is then used for ATP synthesis. This chain is Cytochrome b (cob), found in Aspergillus fumigatus (Neosartorya fumigata).